We begin with the raw amino-acid sequence, 2250 residues long: DNA polymerase epsilon catalytic subunit A (2250 aa).

Disordered regions lie at residues 1-63 (MPSR…GTAA), 235-259 (NGHG…DKEP), and 1990-2010 (PGTE…KAAS). Over residues 32 to 41 (GGGGGGGGVA) the composition is skewed to gly residues. Residues 249-259 (DDTKKKKDKEP) show a composition bias toward basic and acidic residues. Residues 1990-2000 (PGTEATSTMNP) are compositionally biased toward polar residues. 4 residues coordinate Zn(2+): Cys2118, Cys2121, Cys2156, and Cys2159. The CysA-type zinc finger occupies 2118-2159 (CKKCNAIRDVDLCRDPDRLPSVNPDSGEMLEPARKNWVCHKC). Cys2190, Cys2193, Cys2205, and Cys2207 together coordinate [4Fe-4S] cluster. The CysB motif signature appears at 2190–2207 (CLKCSQTKSDNLAATCKC).

Belongs to the DNA polymerase type-B family. In terms of assembly, heterotetramer. Consists of 4 subunits: POL2, DPB2, DPB3 and DPB4. It depends on [4Fe-4S] cluster as a cofactor.

It localises to the nucleus. It catalyses the reaction DNA(n) + a 2'-deoxyribonucleoside 5'-triphosphate = DNA(n+1) + diphosphate. Functionally, DNA polymerase II participates in chromosomal DNA replication. In Cryptococcus neoformans var. neoformans serotype D (strain JEC21 / ATCC MYA-565) (Filobasidiella neoformans), this protein is DNA polymerase epsilon catalytic subunit A (POL2).